The following is a 318-amino-acid chain: Beta-ketoacyl-[acyl-carrier-protein] synthase III (318 aa).

Residues cysteine 112 and histidine 245 contribute to the active site. An ACP-binding region spans residues 246–250; the sequence is QANIR. Asparagine 275 is an active-site residue.

This sequence belongs to the thiolase-like superfamily. FabH family. Homodimer.

It localises to the cytoplasm. It carries out the reaction malonyl-[ACP] + acetyl-CoA + H(+) = 3-oxobutanoyl-[ACP] + CO2 + CoA. It functions in the pathway lipid metabolism; fatty acid biosynthesis. In terms of biological role, catalyzes the condensation reaction of fatty acid synthesis by the addition to an acyl acceptor of two carbons from malonyl-ACP. Catalyzes the first condensation reaction which initiates fatty acid synthesis and may therefore play a role in governing the total rate of fatty acid production. Possesses both acetoacetyl-ACP synthase and acetyl transacylase activities. Its substrate specificity determines the biosynthesis of branched-chain and/or straight-chain of fatty acids. In Rickettsia conorii (strain ATCC VR-613 / Malish 7), this protein is Beta-ketoacyl-[acyl-carrier-protein] synthase III.